The chain runs to 502 residues: Xylulose kinase (502 aa).

82–83 serves as a coordination point for substrate; that stretch reads MH. D240 serves as the catalytic Proton acceptor.

The protein belongs to the FGGY kinase family.

The catalysed reaction is D-xylulose + ATP = D-xylulose 5-phosphate + ADP + H(+). Catalyzes the phosphorylation of D-xylulose to D-xylulose 5-phosphate. This is Xylulose kinase from Levilactobacillus brevis (Lactobacillus brevis).